Consider the following 107-residue polypeptide: U1-lycotoxin-Ls1o (107 aa).

Positions M1–S20 are cleaved as a signal peptide. A propeptide spanning residues E21–R41 is cleaved from the precursor. 4 disulfides stabilise this stretch: C44-C59, C51-C68, C58-C86, and C70-C84.

Belongs to the neurotoxin 19 (CSTX) family. 04 (U1-Lctx) subfamily. As to expression, expressed by the venom gland.

The protein localises to the secreted. The protein is U1-lycotoxin-Ls1o of Lycosa singoriensis (Wolf spider).